A 149-amino-acid chain; its full sequence is FAD synthase (149 aa).

ATP is bound by residues Thr9–Phe10, His14–His17, Asn92, and Tyr119.

Belongs to the archaeal FAD synthase family. As to quaternary structure, homodimer. Requires a divalent metal cation as cofactor.

The catalysed reaction is FMN + ATP + H(+) = FAD + diphosphate. It participates in cofactor biosynthesis; FAD biosynthesis; FAD from FMN: step 1/1. In terms of biological role, catalyzes the transfer of the AMP portion of ATP to flavin mononucleotide (FMN) to produce flavin adenine dinucleotide (FAD) coenzyme. The sequence is that of FAD synthase from Methanoculleus marisnigri (strain ATCC 35101 / DSM 1498 / JR1).